We begin with the raw amino-acid sequence, 157 residues long: Transcriptional repressor NrdR (157 aa).

A zinc finger lies at 3-34 (CPFCRHPDSRVVDSRTSDDGLSIRRRRQCPEC). An ATP-cone domain is found at 46-136 (LSVIKRNGVV…VYQGFDSLDD (91 aa)).

The protein belongs to the NrdR family. It depends on Zn(2+) as a cofactor.

Functionally, negatively regulates transcription of bacterial ribonucleotide reductase nrd genes and operons by binding to NrdR-boxes. The polypeptide is Transcriptional repressor NrdR (Clavibacter sepedonicus (Clavibacter michiganensis subsp. sepedonicus)).